The following is a 73-amino-acid chain: Small ribosomal subunit protein bS18 (73 aa).

The protein belongs to the bacterial ribosomal protein bS18 family. Part of the 30S ribosomal subunit. Forms a tight heterodimer with protein bS6.

Functionally, binds as a heterodimer with protein bS6 to the central domain of the 16S rRNA, where it helps stabilize the platform of the 30S subunit. In Prochlorococcus marinus (strain SARG / CCMP1375 / SS120), this protein is Small ribosomal subunit protein bS18.